Reading from the N-terminus, the 167-residue chain is Ribosome maturation factor RimM (167 aa).

The PRC barrel domain occupies 94-166 (TGRAYLHELI…YMVVPRFDEF (73 aa)).

It belongs to the RimM family. Binds ribosomal protein uS19.

The protein resides in the cytoplasm. In terms of biological role, an accessory protein needed during the final step in the assembly of 30S ribosomal subunit, possibly for assembly of the head region. Essential for efficient processing of 16S rRNA. May be needed both before and after RbfA during the maturation of 16S rRNA. It has affinity for free ribosomal 30S subunits but not for 70S ribosomes. In Chlorobium phaeobacteroides (strain DSM 266 / SMG 266 / 2430), this protein is Ribosome maturation factor RimM.